We begin with the raw amino-acid sequence, 613 residues long: Zinc metalloproteinase-disintegrin-like MTP4 (613 aa).

The signal sequence occupies residues 1-20; it reads MIEVLLVTICFTVFPYQGSS. Positions 21 to 191 are excised as a propeptide; the sequence is IILESGNVND…DEPIEKISQL (171 aa). Residues 205 to 401 form the Peptidase M12B domain; sequence KYIELYVVVD…VRPQCILNKP (197 aa). E208 is a binding site for Ca(2+). N-linked (GlcNAc...) asparagine glycosylation is present at N282. D292 is a binding site for Ca(2+). Intrachain disulfides connect C316-C396, C356-C380, and C358-C363. Zn(2+) contacts are provided by H341, H345, and H351. 7 residues coordinate Ca(2+): C396, N399, N414, F416, E418, E421, and D424. The Disintegrin domain occupies 409 to 495; it reads PPVCGNYFVE…KCPTDSFQRN (87 aa). 15 disulfides stabilise this stretch: C412–C441, C423–C436, C425–C431, C435–C458, C449–C455, C454–C480, C467–C487, C474–C506, C499–C511, C518–C568, C533–C575, C543–C577, C546–C556, C563–C601, and C595–C606. N-linked (GlcNAc...) asparagine glycosylation occurs at N437. Residues 473 to 475 carry the D/ECD-tripeptide motif; that stretch reads DCD. 4 residues coordinate Ca(2+): D475, L476, E478, and D490. Positions 561-574 are hypervariable region that may play important roles toward cell migration; the sequence is KMCGKLLCEKGNAT. N572 is a glycosylation site (N-linked (GlcNAc...) asparagine).

This sequence belongs to the venom metalloproteinase (M12B) family. P-III subfamily. In terms of assembly, monomer. The cofactor is Zn(2+). In terms of tissue distribution, expressed by the venom gland.

It is found in the secreted. In terms of biological role, snake venom zinc metalloproteinase that may impair hemostasis in the prey. The polypeptide is Zinc metalloproteinase-disintegrin-like MTP4 (Drysdalia coronoides (White-lipped snake)).